The chain runs to 669 residues: Acetolactate synthase, mitochondrial (669 aa).

The transit peptide at 1–140 (MTVLAPLRRL…PRHEQAAGHA (140 aa)) directs the protein to the mitochondrion. Position 134 (glutamate 134) interacts with thiamine diphosphate. FAD contacts are provided by residues arginine 236, 351-372 (HGSG…LGVR), and 403-422 (DISP…IEGD). Residues 497-577 (AHQMWAATFY…VKILILNNEE (81 aa)) are thiamine pyrophosphate binding. The Mg(2+) site is built by aspartate 548 and asparagine 575.

This sequence belongs to the TPP enzyme family. Mg(2+) is required as a cofactor. It depends on thiamine diphosphate as a cofactor.

It is found in the mitochondrion. The enzyme catalyses 2 pyruvate + H(+) = (2S)-2-acetolactate + CO2. Its pathway is amino-acid biosynthesis; L-isoleucine biosynthesis; L-isoleucine from 2-oxobutanoate: step 1/4. The protein operates within amino-acid biosynthesis; L-valine biosynthesis; L-valine from pyruvate: step 1/4. The sequence is that of Acetolactate synthase, mitochondrial (ilv1) from Schizosaccharomyces pombe (strain 972 / ATCC 24843) (Fission yeast).